We begin with the raw amino-acid sequence, 453 residues long: Ribose 1,5-bisphosphate phosphokinase PhnN (453 aa).

The tract at residues 1–21 (MHGSTGFVQGTRPAGDQADPL) is disordered. Residues 1 to 271 (MHGSTGFVQG…SGQGERASLP (271 aa)) form a unknown region. Residues 272–453 (HSGRIFFCVG…KLLDILRQAK (182 aa)) form a ribose 1,5-bisphosphokinase region.

It in the C-terminal section; belongs to the ribose 1,5-bisphosphokinase family.

It catalyses the reaction alpha-D-ribose 1,5-bisphosphate + ATP = 5-phospho-alpha-D-ribose 1-diphosphate + ADP. It participates in metabolic intermediate biosynthesis; 5-phospho-alpha-D-ribose 1-diphosphate biosynthesis; 5-phospho-alpha-D-ribose 1-diphosphate from D-ribose 5-phosphate (route II): step 3/3. Functionally, catalyzes the phosphorylation of ribose 1,5-bisphosphate to 5-phospho-D-ribosyl alpha-1-diphosphate (PRPP). The chain is Ribose 1,5-bisphosphate phosphokinase PhnN (phnN) from Janthinobacterium sp. (strain Marseille) (Minibacterium massiliensis).